A 123-amino-acid chain; its full sequence is Protein Wnt-3 (123 aa).

Ser-1 carries O-palmitoleoyl serine; by PORCN lipidation. An intrachain disulfide couples Cys-89 to Cys-104. Residue Asn-90 is glycosylated (N-linked (GlcNAc...) asparagine).

This sequence belongs to the Wnt family. In terms of processing, palmitoleoylation is required for efficient binding to frizzled receptors. Depalmitoleoylation leads to Wnt signaling pathway inhibition.

The protein localises to the secreted. It localises to the extracellular space. Its subcellular location is the extracellular matrix. Ligand for members of the frizzled family of seven transmembrane receptors. Functions in the canonical Wnt signaling pathway that results in activation of transcription factors of the TCF/LEF family. Required for normal embryonic development. This chain is Protein Wnt-3 (WNT-3), found in Eptatretus stoutii (Pacific hagfish).